Reading from the N-terminus, the 66-residue chain is Large ribosomal subunit protein bL28 (66 aa).

It belongs to the bacterial ribosomal protein bL28 family.

The chain is Large ribosomal subunit protein bL28 from Oenococcus oeni (strain ATCC BAA-331 / PSU-1).